A 294-amino-acid polypeptide reads, in one-letter code: 33 kDa chaperonin (294 aa).

2 cysteine pairs are disulfide-bonded: C239–C241 and C272–C275.

Belongs to the HSP33 family. Post-translationally, under oxidizing conditions two disulfide bonds are formed involving the reactive cysteines. Under reducing conditions zinc is bound to the reactive cysteines and the protein is inactive.

The protein resides in the cytoplasm. In terms of biological role, redox regulated molecular chaperone. Protects both thermally unfolding and oxidatively damaged proteins from irreversible aggregation. Plays an important role in the bacterial defense system toward oxidative stress. This Listeria welshimeri serovar 6b (strain ATCC 35897 / DSM 20650 / CCUG 15529 / CIP 8149 / NCTC 11857 / SLCC 5334 / V8) protein is 33 kDa chaperonin.